The sequence spans 103 residues: Pyrimidine/purine nucleoside phosphorylase (103 aa).

Belongs to the nucleoside phosphorylase PpnP family.

The enzyme catalyses a purine D-ribonucleoside + phosphate = a purine nucleobase + alpha-D-ribose 1-phosphate. It catalyses the reaction adenosine + phosphate = alpha-D-ribose 1-phosphate + adenine. The catalysed reaction is cytidine + phosphate = cytosine + alpha-D-ribose 1-phosphate. It carries out the reaction guanosine + phosphate = alpha-D-ribose 1-phosphate + guanine. The enzyme catalyses inosine + phosphate = alpha-D-ribose 1-phosphate + hypoxanthine. It catalyses the reaction thymidine + phosphate = 2-deoxy-alpha-D-ribose 1-phosphate + thymine. The catalysed reaction is uridine + phosphate = alpha-D-ribose 1-phosphate + uracil. It carries out the reaction xanthosine + phosphate = alpha-D-ribose 1-phosphate + xanthine. Functionally, catalyzes the phosphorolysis of diverse nucleosides, yielding D-ribose 1-phosphate and the respective free bases. Can use uridine, adenosine, guanosine, cytidine, thymidine, inosine and xanthosine as substrates. Also catalyzes the reverse reactions. The chain is Pyrimidine/purine nucleoside phosphorylase from Sulfurimonas denitrificans (strain ATCC 33889 / DSM 1251) (Thiomicrospira denitrificans (strain ATCC 33889 / DSM 1251)).